Consider the following 476-residue polypeptide: Glycogen synthase (476 aa).

Residue lysine 15 participates in ADP-alpha-D-glucose binding.

Belongs to the glycosyltransferase 1 family. Bacterial/plant glycogen synthase subfamily.

The enzyme catalyses [(1-&gt;4)-alpha-D-glucosyl](n) + ADP-alpha-D-glucose = [(1-&gt;4)-alpha-D-glucosyl](n+1) + ADP + H(+). It participates in glycan biosynthesis; glycogen biosynthesis. Its function is as follows. Synthesizes alpha-1,4-glucan chains using ADP-glucose. This is Glycogen synthase from Chlamydia pneumoniae (Chlamydophila pneumoniae).